Here is an 83-residue protein sequence, read N- to C-terminus: Insect toxin 2-13 (83 aa).

Residues 1 to 21 form the signal peptide; sequence MKLLLLLIITASMLIEGLVNA. Residues 22 to 80 enclose the LCN-type CS-alpha/beta domain; the sequence is DVYIRRHDGCKISCTVNDKYCDNECKSEGGSYGYCYAFGCWCEGLPNDKAWKSETNTCG. 4 cysteine pairs are disulfide-bonded: cysteine 31/cysteine 79, cysteine 35/cysteine 56, cysteine 42/cysteine 61, and cysteine 46/cysteine 63. Glycine 80 is modified (glycine amide).

The protein belongs to the long (4 C-C) scorpion toxin superfamily. Sodium channel inhibitor family. Beta subfamily. Expressed by the venom gland.

It is found in the secreted. Its function is as follows. Depressant insect toxins cause a transient contraction paralysis followed by a slow flaccid paralysis. They bind voltage-independently to sodium channels (Nav) and block action potentials, primarily by depolarizing the axonal membrane and suppressing the sodium current. This Leiurus hebraeus (Hebrew deathstalker scorpion) protein is Insect toxin 2-13.